Consider the following 446-residue polypeptide: Enolase (446 aa).

Residues His-164 and Glu-173 each coordinate substrate. Glu-216 acts as the Proton donor in catalysis. Mg(2+) contacts are provided by Asp-251, Glu-302, and Asp-329. Substrate contacts are provided by Glu-302 and Asp-329. Lys-354 functions as the Proton acceptor in the catalytic mechanism. Substrate contacts are provided by residues 381–384 (SHRS) and Lys-405.

Belongs to the enolase family. Homodimer. Requires Mg(2+) as cofactor.

The protein resides in the cytoplasm. It carries out the reaction (2R)-2-phosphoglycerate = phosphoenolpyruvate + H2O. Its pathway is carbohydrate degradation; glycolysis; pyruvate from D-glyceraldehyde 3-phosphate: step 4/5. This is Enolase (ENO1) from Oryza sativa subsp. japonica (Rice).